A 437-amino-acid chain; its full sequence is Ribosomal protein uS12 methylthiotransferase RimO (437 aa).

The 117-residue stretch at 9 to 125 (PAIFLLSLGC…VLAAIGAHYC (117 aa)) folds into the MTTase N-terminal domain. Cys18, Cys54, Cys88, Cys149, Cys153, and Cys156 together coordinate [4Fe-4S] cluster. The Radical SAM core domain maps to 135-364 (LTPPHYAFLK…MELQESIAAS (230 aa)). The region spanning 367 to 434 (RKLEGQTLTV…AYELFGRVGS (68 aa)) is the TRAM domain.

This sequence belongs to the methylthiotransferase family. RimO subfamily. [4Fe-4S] cluster is required as a cofactor.

Its subcellular location is the cytoplasm. It carries out the reaction L-aspartate(89)-[ribosomal protein uS12]-hydrogen + (sulfur carrier)-SH + AH2 + 2 S-adenosyl-L-methionine = 3-methylsulfanyl-L-aspartate(89)-[ribosomal protein uS12]-hydrogen + (sulfur carrier)-H + 5'-deoxyadenosine + L-methionine + A + S-adenosyl-L-homocysteine + 2 H(+). Functionally, catalyzes the methylthiolation of an aspartic acid residue of ribosomal protein uS12. This Chlorobaculum parvum (strain DSM 263 / NCIMB 8327) (Chlorobium vibrioforme subsp. thiosulfatophilum) protein is Ribosomal protein uS12 methylthiotransferase RimO.